A 185-amino-acid polypeptide reads, in one-letter code: Ribosome-recycling factor (185 aa).

Belongs to the RRF family.

The protein localises to the cytoplasm. Responsible for the release of ribosomes from messenger RNA at the termination of protein biosynthesis. May increase the efficiency of translation by recycling ribosomes from one round of translation to another. This chain is Ribosome-recycling factor, found in Pseudomonas putida (strain GB-1).